The sequence spans 346 residues: MVEKEEAGGGISEEEAAQYDRQIRLWGLEAQKRLRASQVLLVGMKGLGAEIAKNLILAGVKGLTMLDHEQVSPEDPGAQFLIRTGSVGRNRAEASLERAQNLNPMVDVKVDTENIEKKPESFFTQFDAVCLTCCSRDVIVKVDQICHKNSIKFFTGDVFGYHGYTFANLGEHEFVEEKTKVAKVSQGVEDGPDTKRAKLDSSETTMVKKKVVFCSVKEALEVDWSSDKAKAALKRTTPDYFLLQVLLKFRTDKGRDPSSDTFGEDSELLLQIRNDVLDALGVNPDLLPEDFVRYCFSEMAPVCAVVGGILAQEIVKALSQRDPPHNNFFFFDGMKGNGIVECLGPN.

M1 bears the N-acetylmethionine mark. V2 is modified (N-acetylvaline; in SUMO-activating enzyme subunit 1, N-terminally processed). The residue at position 12 (S12) is a Phosphoserine. K198 carries the post-translational modification N6-acetyllysine.

It belongs to the ubiquitin-activating E1 family. In terms of assembly, heterodimer of SAE1 and UBA2/SAE2. The heterodimer corresponds to the two domains that are encoded on a single polypeptide chain in ubiquitin-activating enzyme E1. Interacts with UBE2I.

It localises to the nucleus. The protein operates within protein modification; protein sumoylation. In terms of biological role, the heterodimer acts as an E1 ligase for SUMO1, SUMO2, SUMO3, and probably SUMO4. It mediates ATP-dependent activation of SUMO proteins followed by formation of a thioester bond between a SUMO protein and a conserved active site cysteine residue on UBA2/SAE2. The polypeptide is SUMO-activating enzyme subunit 1 (SAE1) (Bos taurus (Bovine)).